Consider the following 257-residue polypeptide: Pimeloyl-[acyl-carrier protein] methyl ester esterase (257 aa).

Residues 16 to 240 (LVLIHGWGMN…EQASHAPFIS (225 aa)) enclose the AB hydrolase-1 domain. Substrate is bound by residues W22, 82 to 83 (SL), and 143 to 147 (FMALQ). S82 functions as the Nucleophile in the catalytic mechanism. Residues D207 and H235 contribute to the active site. H235 provides a ligand contact to substrate.

This sequence belongs to the AB hydrolase superfamily. Carboxylesterase BioH family. In terms of assembly, monomer.

The protein resides in the cytoplasm. It catalyses the reaction 6-carboxyhexanoyl-[ACP] methyl ester + H2O = 6-carboxyhexanoyl-[ACP] + methanol + H(+). It functions in the pathway cofactor biosynthesis; biotin biosynthesis. The physiological role of BioH is to remove the methyl group introduced by BioC when the pimeloyl moiety is complete. It allows to synthesize pimeloyl-ACP via the fatty acid synthetic pathway through the hydrolysis of the ester bonds of pimeloyl-ACP esters. This Aliivibrio fischeri (strain MJ11) (Vibrio fischeri) protein is Pimeloyl-[acyl-carrier protein] methyl ester esterase.